Here is a 1044-residue protein sequence, read N- to C-terminus: Elongation factor 3 (1044 aa).

The HEAT 1 repeat unit spans residues 5 to 42 (AQSIKVLGELFEKLSVATAENREATATEIASFLNGNII). Residues isoleucine 42 and histidine 44 each coordinate ADP. Residues 45–80 (DVPEEFFKNLTKAVKDKKTAAAALETIAHIANENNL) form an HEAT 2 repeat. Serine 83 is a binding site for ADP. HEAT repeat units follow at residues 86-123 (PYIV…AIDP), 124-162 (VAIK…AAKT), 166-203 (LRMP…TVDN), 205-241 (DIER…EVTP), 242-279 (ATLS…LVED), and 285-323 (PFLE…VGNV). Positions 392, 396, and 397 each coordinate ADP. 2 ABC transporter domains span residues 426–641 (DEGE…YYEL) and 667–993 (VKVS…KKED). Positions 703, 922, 925, and 951 each coordinate ADP. The disordered stretch occupies residues 975-1044 (GHNWVSGQGS…DAYVSSDDEF (70 aa)). The span at 987–999 (RLEKKEDEGDKFD) shows a compositional bias: basic and acidic residues. Positions 1009–1031 (NKKKKLSSAELRKKKKERMKKKK) are enriched in basic residues.

Belongs to the ABC transporter superfamily. ABCF family. EF3 subfamily. In terms of assembly, monomer.

Its subcellular location is the cytoplasm. The enzyme catalyses ATP + H2O = ADP + phosphate + H(+). It functions in the pathway protein biosynthesis; polypeptide chain elongation. Ribosome-dependent ATPase that functions in cytoplasmic translation elongation. Required for the ATP-dependent release of deacylated tRNA from the ribosomal E-site during protein biosynthesis. Stimulates the eEF1A-dependent binding of aminoacyl-tRNA to the ribosomal A-site, which has reduced affinity for tRNA as long as the E-site is occupied. Assists translation termination by stimulating the release of nascent protein from the ribosome by release factors. This Eremothecium gossypii (strain ATCC 10895 / CBS 109.51 / FGSC 9923 / NRRL Y-1056) (Yeast) protein is Elongation factor 3 (TEF3).